The sequence spans 1067 residues: SURP and G-patch domain-containing protein 2 (1067 aa).

Position 93 is a phosphoserine (Ser-93). Basic and acidic residues predominate over residues 177 to 189 (KESRDYDLDHPGE). Residues 177–199 (KESRDYDLDHPGEVDSVSRSSGQ) form a disordered region. Ser-206 is subject to Phosphoserine. Lys-219 is covalently cross-linked (Glycyl lysine isopeptide (Lys-Gly) (interchain with G-Cter in SUMO2)). Thr-265 carries the post-translational modification Phosphothreonine. Phosphoserine is present on residues Ser-267 and Ser-586. One copy of the SURP motif 1 repeat lies at 573–616 (IDQLVMRVIQGRLSPRERTLLLQDPAYWFLSDESSLEYKYYKLK). The segment at 668–767 (SQGPRGLKAK…CPSANMDAKT (100 aa)) is disordered. The span at 680-691 (TTAQQTSLSSGT) shows a compositional bias: polar residues. Ser-740 bears the Phosphoserine mark. Thr-744 is subject to Phosphothreonine. The stretch at 770 to 813 (TAEKLARFVAQVGPEIEQFSIENSTDNPDLWFLHDQSSSAFKFY) is one SURP motif 2 repeat. Polar residues predominate over residues 825–840 (SFQSTGEAGDSVQSPT). Disordered stretches follow at residues 825 to 944 (SFQS…KSLK) and 967 to 991 (RIAY…EFSQ). Residue Ser-838 is modified to Phosphoserine. Residues 843–856 (KEGKGEPQEGHPEQ) are compositionally biased toward basic and acidic residues. Positions 866 to 883 (LPEEEEEDEEESEDEGGE) are enriched in acidic residues. The span at 919-931 (ASTPGLSQASSGS) shows a compositional bias: polar residues. Residues 975-984 (GRPIAKKKKP) show a composition bias toward basic residues. A Nuclear localization signal motif is present at residues 980–985 (KKKKPK). The 47-residue stretch at 996–1042 (DKNVGFQMLQKMGWKEGHGLGSLGKGIREPVSVGALSEGEGLGADGP) folds into the G-patch domain.

The protein resides in the nucleus. Functionally, may play a role in mRNA splicing. This chain is SURP and G-patch domain-containing protein 2 (Sugp2), found in Mus musculus (Mouse).